A 496-amino-acid chain; its full sequence is T-cell activation inhibitor, mitochondrial (496 aa).

The stretch at 404-437 forms a coiled coil; it reads KAQQARENMKRKEELKVIENELIQASTKKFSLEK.

It is found in the mitochondrion. Its function is as follows. May regulate T-cell apoptosis. The chain is T-cell activation inhibitor, mitochondrial (TCAIM) from Homo sapiens (Human).